Here is a 975-residue protein sequence, read N- to C-terminus: Glycine dehydrogenase (decarboxylating) (975 aa).

At lysine 723 the chain carries N6-(pyridoxal phosphate)lysine.

It belongs to the GcvP family. In terms of assembly, the glycine cleavage system is composed of four proteins: P, T, L and H. It depends on pyridoxal 5'-phosphate as a cofactor.

The enzyme catalyses N(6)-[(R)-lipoyl]-L-lysyl-[glycine-cleavage complex H protein] + glycine + H(+) = N(6)-[(R)-S(8)-aminomethyldihydrolipoyl]-L-lysyl-[glycine-cleavage complex H protein] + CO2. In terms of biological role, the glycine cleavage system catalyzes the degradation of glycine. The P protein binds the alpha-amino group of glycine through its pyridoxal phosphate cofactor; CO(2) is released and the remaining methylamine moiety is then transferred to the lipoamide cofactor of the H protein. The protein is Glycine dehydrogenase (decarboxylating) of Burkholderia ambifaria (strain MC40-6).